We begin with the raw amino-acid sequence, 365 residues long: UDP-N-acetylglucosamine--N-acetylmuramyl-(pentapeptide) pyrophosphoryl-undecaprenol N-acetylglucosamine transferase (365 aa).

Residues 19–21 (TGG), Asn-131, Arg-170, Ser-201, Ile-255, 274–279 (ALTVTE), and Gln-300 each bind UDP-N-acetyl-alpha-D-glucosamine.

It belongs to the glycosyltransferase 28 family. MurG subfamily.

The protein localises to the cell inner membrane. The catalysed reaction is di-trans,octa-cis-undecaprenyl diphospho-N-acetyl-alpha-D-muramoyl-L-alanyl-D-glutamyl-meso-2,6-diaminopimeloyl-D-alanyl-D-alanine + UDP-N-acetyl-alpha-D-glucosamine = di-trans,octa-cis-undecaprenyl diphospho-[N-acetyl-alpha-D-glucosaminyl-(1-&gt;4)]-N-acetyl-alpha-D-muramoyl-L-alanyl-D-glutamyl-meso-2,6-diaminopimeloyl-D-alanyl-D-alanine + UDP + H(+). It functions in the pathway cell wall biogenesis; peptidoglycan biosynthesis. Its function is as follows. Cell wall formation. Catalyzes the transfer of a GlcNAc subunit on undecaprenyl-pyrophosphoryl-MurNAc-pentapeptide (lipid intermediate I) to form undecaprenyl-pyrophosphoryl-MurNAc-(pentapeptide)GlcNAc (lipid intermediate II). This is UDP-N-acetylglucosamine--N-acetylmuramyl-(pentapeptide) pyrophosphoryl-undecaprenol N-acetylglucosamine transferase from Acinetobacter baumannii (strain SDF).